Consider the following 316-residue polypeptide: Ribosomal protein L11 methyltransferase (316 aa).

Positions 163, 184, 206, and 249 each coordinate S-adenosyl-L-methionine.

This sequence belongs to the methyltransferase superfamily. PrmA family.

Its subcellular location is the cytoplasm. The catalysed reaction is L-lysyl-[protein] + 3 S-adenosyl-L-methionine = N(6),N(6),N(6)-trimethyl-L-lysyl-[protein] + 3 S-adenosyl-L-homocysteine + 3 H(+). Methylates ribosomal protein L11. The chain is Ribosomal protein L11 methyltransferase from Pediococcus pentosaceus (strain ATCC 25745 / CCUG 21536 / LMG 10740 / 183-1w).